The primary structure comprises 198 residues: Probable chemoreceptor glutamine deamidase CheD (198 aa).

It belongs to the CheD family.

It catalyses the reaction L-glutaminyl-[protein] + H2O = L-glutamyl-[protein] + NH4(+). Functionally, probably deamidates glutamine residues to glutamate on methyl-accepting chemotaxis receptors (MCPs), playing an important role in chemotaxis. This Xanthomonas axonopodis pv. citri (strain 306) protein is Probable chemoreceptor glutamine deamidase CheD.